The following is a 489-amino-acid chain: N-succinylglutamate 5-semialdehyde dehydrogenase (489 aa).

G223–G228 contacts NAD(+). Residues E246 and C280 contribute to the active site.

Belongs to the aldehyde dehydrogenase family. AstD subfamily.

The enzyme catalyses N-succinyl-L-glutamate 5-semialdehyde + NAD(+) + H2O = N-succinyl-L-glutamate + NADH + 2 H(+). The protein operates within amino-acid degradation; L-arginine degradation via AST pathway; L-glutamate and succinate from L-arginine: step 4/5. Its function is as follows. Catalyzes the NAD-dependent reduction of succinylglutamate semialdehyde into succinylglutamate. The sequence is that of N-succinylglutamate 5-semialdehyde dehydrogenase from Acinetobacter baylyi (strain ATCC 33305 / BD413 / ADP1).